The primary structure comprises 430 residues: MRIGFLGFGKSNRSLLKYLLKHQEAKFFVSEAKTLDGETKKFLEEHSVEYEEGGHTEKLLDCDVVYVSPGIKPDTSIIKLLSSRGAKLSTELQLFLDNVDPKKVVGITGTDGKSTATALMHHVLSRRGFKTFLGGNFGTPAVEALEGEYDYYVLEMSSFQLFWSERPYLSNFLVLNISEDHLDWHSSFEEYVDSKLKPAFLQTEGDLFVYNKHIERLRNLEGVRSRKIPFWTGENFATERELIVHGKKYTLPGNYPYQTRENILAVSILYMEMFNELESFLELLRDFKPLPHRMEYLGQIDGRHFYNDSKATSTHAVLGALSNFDKVVLIMCGIGKKENYSLFVEKASPKLKHLIMFGEISKELAPFVGKIPHSIVENMEEAFEKAMEVSEKGDVILLSPGGASFDMYENYAKRGEHFRELFERHGGDKV.

109 to 115 lines the ATP pocket; sequence GTDGKST.

Belongs to the MurCDEF family.

The protein localises to the cytoplasm. It carries out the reaction UDP-N-acetyl-alpha-D-muramoyl-L-alanine + D-glutamate + ATP = UDP-N-acetyl-alpha-D-muramoyl-L-alanyl-D-glutamate + ADP + phosphate + H(+). The protein operates within cell wall biogenesis; peptidoglycan biosynthesis. Functionally, cell wall formation. Catalyzes the addition of glutamate to the nucleotide precursor UDP-N-acetylmuramoyl-L-alanine (UMA). The polypeptide is UDP-N-acetylmuramoylalanine--D-glutamate ligase (Thermotoga sp. (strain RQ2)).